Here is a 132-residue protein sequence, read N- to C-terminus: Small ribosomal subunit protein uS11 (132 aa).

The protein belongs to the universal ribosomal protein uS11 family. In terms of assembly, part of the 30S ribosomal subunit. Interacts with proteins S7 and S18. Binds to IF-3.

Located on the platform of the 30S subunit, it bridges several disparate RNA helices of the 16S rRNA. Forms part of the Shine-Dalgarno cleft in the 70S ribosome. The protein is Small ribosomal subunit protein uS11 of Dichelobacter nodosus (strain VCS1703A).